A 102-amino-acid chain; its full sequence is Large ribosomal subunit protein bL21 (102 aa).

It belongs to the bacterial ribosomal protein bL21 family. As to quaternary structure, part of the 50S ribosomal subunit. Contacts protein L20.

In terms of biological role, this protein binds to 23S rRNA in the presence of protein L20. This is Large ribosomal subunit protein bL21 from Staphylococcus aureus.